The primary structure comprises 112 residues: Large ribosomal subunit protein P2 (112 aa).

A disordered region spans residues 81–112 (VETAEAKKEDKKEEKKEEEEEEEDDLGFSLFG). Residues 84–95 (AEAKKEDKKEEK) show a composition bias toward basic and acidic residues. The segment covering 96–106 (KEEEEEEEDDL) has biased composition (acidic residues).

This sequence belongs to the eukaryotic ribosomal protein P1/P2 family. In terms of assembly, P1 and P2 exist as dimers at the large ribosomal subunit. Phosphorylated.

In terms of biological role, plays an important role in the elongation step of protein synthesis. The sequence is that of Large ribosomal subunit protein P2 (MAL3P3.19) from Plasmodium falciparum (isolate 3D7).